Here is a 526-residue protein sequence, read N- to C-terminus: Thymocyte selection-associated high mobility group box protein TOX (526 aa).

Disordered stretches follow at residues 138 to 178 and 192 to 264; these read MPDI…PHGQ and GLNM…PQKP. The span at 192–203 shows a compositional bias: polar residues; sequence GLNMGGSNVPHN. Residues 209–220 show a composition bias toward low complexity; that stretch reads GSKSATPSPSSS. Residues 228 to 245 show a composition bias toward basic and acidic residues; sequence DTSKINGGEKRPASDMGK. A Nuclear localization signal motif is present at residues 237–256; sequence KRPASDMGKKPKTPKKKKKK. A compositionally biased stretch (basic residues) spans 246–256; that stretch reads KPKTPKKKKKK. Positions 261–329 form a DNA-binding region, HMG box; that stretch reads PQKPVSAYAL…EYLKQLAAYR (69 aa).

This sequence belongs to the high motility group (HMG) box superfamily. As to quaternary structure, interacts with HBO1 complex composed at least of KAT7/HBO1, ING4, MEAF6, and JADE2; this complex is involved in histone acetylation. Interacts with DNMT1, LEO1, PAF1, SAP130 and SIN3A; these interactors regulate chromatin remodeling. Interacts with an array of proteins involved in RNA processing and translation and DNA replication. Expressed in NK cells. Highly expressed in tumor-infiltrating CD8-positive T cells (at protein level).

Its subcellular location is the nucleus. Transcriptional regulator with a major role in neural stem cell commitment and corticogenesis as well as in lymphoid cell development and lymphoid tissue organogenesis. Binds to GC-rich DNA sequences in the proximity of transcription start sites and may alter chromatin structure, modifying access of transcription factors to DNA. During cortical development, controls the neural stem cell pool by inhibiting the switch from proliferative to differentiating progenitors. Beyond progenitor cells, promotes neurite outgrowth in newborn neurons migrating to reach the cortical plate. May activate or repress critical genes for neural stem cell fate such as SOX2, EOMES and ROBO2. Plays an essential role in the development of lymphoid tissue-inducer (LTi) cells, a subset necessary for the formation of secondary lymphoid organs: peripheral lymph nodes and Peyer's patches. Acts as a developmental checkpoint and regulates thymocyte positive selection toward T cell lineage commitment. Required for the development of various T cell subsets, including CD4-positive helper T cells, CD8-positive cytotoxic T cells, regulatory T cells and CD1D-dependent natural killer T (NKT) cells. Required for the differentiation of common lymphoid progenitors (CMP) to innate lymphoid cells (ILC). May regulate the NOTCH-mediated gene program, promoting differentiation of the ILC lineage. Required at the progenitor phase of NK cell development in the bone marrow to specify NK cell lineage commitment. Upon chronic antigen stimulation, diverts T cell development by promoting the generation of exhaustive T cells, while suppressing effector and memory T cell programming. May regulate the expression of genes encoding inhibitory receptors such as PDCD1 and induce the exhaustion program, to prevent the overstimulation of T cells and activation-induced cell death. This Homo sapiens (Human) protein is Thymocyte selection-associated high mobility group box protein TOX.